The sequence spans 157 residues: MNKIESRHQLILSLIMEKKIHTQQELQELLEVNGVSVTQSTLSRDIKMLNLVKVNEDDSSHYVINPIAPTRWEKRLRLYMEDALVMLKPIQHQVVLKTLPGLANSFGSILDAMEIPQIVATVCGDDVCLIICEDVEGAQACFEHLKQFTPPFFFSKL.

It belongs to the ArgR family.

Its subcellular location is the cytoplasm. The protein operates within amino-acid degradation; L-arginine degradation via ADI pathway. In the presence of arginine, coactivates the transcription of the arcABDC operon, with other regulatory proteins such as ArcR and CcpA. The chain is Arginine regulator (argR) from Streptococcus suis.